The sequence spans 539 residues: Probable 1,4-beta-D-glucan cellobiohydrolase B (539 aa).

The signal sequence occupies residues 1–26 (MLPSTISYRIYKNALFFAALFGAVQA). The catalytic stretch occupies residues 27–461 (QKVGTSKAEV…SNIKVGPIGS (435 aa)). The N-linked (GlcNAc...) asparagine glycan is linked to Asn90. Catalysis depends on Glu238, which acts as the Nucleophile. Glu243 (proton donor) is an active-site residue. N-linked (GlcNAc...) asparagine glycans are attached at residues Asn296 and Asn495. The tract at residues 462–503 (TFNSGGSNPGGSTTTTKPATSTTTTKATTTATTNTTGPTGTG) is thr-rich linker. Low complexity predominate over residues 462-503 (TFNSGGSNPGGSTTTTKPATSTTTTKATTTATTNTTGPTGTG). Residues 462–504 (TFNSGGSNPGGSTTTTKPATSTTTTKATTTATTNTTGPTGTGV) are disordered. The CBM1 domain maps to 503–539 (GVAQPWAQCGGIGYSGPTQCAAPYTCTKQNDYYSQCL). 2 disulfides stabilise this stretch: Cys511/Cys528 and Cys522/Cys538.

The protein belongs to the glycosyl hydrolase 7 (cellulase C) family.

The protein localises to the secreted. It carries out the reaction Hydrolysis of (1-&gt;4)-beta-D-glucosidic linkages in cellulose and cellotetraose, releasing cellobiose from the non-reducing ends of the chains.. Its function is as follows. The biological conversion of cellulose to glucose generally requires three types of hydrolytic enzymes: (1) Endoglucanases which cut internal beta-1,4-glucosidic bonds; (2) Exocellobiohydrolases that cut the disaccharide cellobiose from the non-reducing end of the cellulose polymer chain; (3) Beta-1,4-glucosidases which hydrolyze the cellobiose and other short cello-oligosaccharides to glucose. The chain is Probable 1,4-beta-D-glucan cellobiohydrolase B (cbhB) from Aspergillus clavatus (strain ATCC 1007 / CBS 513.65 / DSM 816 / NCTC 3887 / NRRL 1 / QM 1276 / 107).